A 250-amino-acid chain; its full sequence is Ubiquinone/menaquinone biosynthesis C-methyltransferase UbiE (250 aa).

Residues serine 73, aspartate 94, and 122–123 (NA) each bind S-adenosyl-L-methionine.

This sequence belongs to the class I-like SAM-binding methyltransferase superfamily. MenG/UbiE family.

The enzyme catalyses a 2-demethylmenaquinol + S-adenosyl-L-methionine = a menaquinol + S-adenosyl-L-homocysteine + H(+). It catalyses the reaction a 2-methoxy-6-(all-trans-polyprenyl)benzene-1,4-diol + S-adenosyl-L-methionine = a 5-methoxy-2-methyl-3-(all-trans-polyprenyl)benzene-1,4-diol + S-adenosyl-L-homocysteine + H(+). It functions in the pathway quinol/quinone metabolism; menaquinone biosynthesis; menaquinol from 1,4-dihydroxy-2-naphthoate: step 2/2. The protein operates within cofactor biosynthesis; ubiquinone biosynthesis. Its function is as follows. Methyltransferase required for the conversion of demethylmenaquinol (DMKH2) to menaquinol (MKH2) and the conversion of 2-polyprenyl-6-methoxy-1,4-benzoquinol (DDMQH2) to 2-polyprenyl-3-methyl-6-methoxy-1,4-benzoquinol (DMQH2). The protein is Ubiquinone/menaquinone biosynthesis C-methyltransferase UbiE of Legionella pneumophila (strain Lens).